The following is an 854-amino-acid chain: Iron and copper transporter IacT (854 aa).

Residues 187–194 (IELIVTAQ) carry the TonB box motif. The region spanning 199-315 (DAQDVPLSLT…PAGVVNVISR (117 aa)) is the TBDR plug domain. Positions 320–854 (QPEMRISALY…TYGVRVSASF (535 aa)) constitute a TBDR beta-barrel domain. Positions 839–854 (GFGDPVTYGVRVSASF) match the TonB C-terminal box motif.

Belongs to the TonB-dependent receptor family.

The protein resides in the cell outer membrane. Its function is as follows. Involved in the TonB-dependent uptake of copper and iron under conditions in which the concentration of copper exceeds that of the iron. The protein is Iron and copper transporter IacT of Nostoc sp. (strain PCC 7120 / SAG 25.82 / UTEX 2576).